We begin with the raw amino-acid sequence, 391 residues long: Putative protein PLEKHA9 (391 aa).

The chain is Putative protein PLEKHA9 (PLEKHA8P1) from Homo sapiens (Human).